The chain runs to 294 residues: Phosphatidylserine decarboxylase proenzyme (294 aa).

Active-site charge relay system; for autoendoproteolytic cleavage activity residues include Asp-113, His-169, and Ser-256. Ser-256 (schiff-base intermediate with substrate; via pyruvic acid; for decarboxylase activity) is an active-site residue. Ser-256 is modified (pyruvic acid (Ser); by autocatalysis).

Belongs to the phosphatidylserine decarboxylase family. PSD-B subfamily. Prokaryotic type II sub-subfamily. As to quaternary structure, heterodimer of a large membrane-associated beta subunit and a small pyruvoyl-containing alpha subunit. Pyruvate serves as cofactor. Post-translationally, is synthesized initially as an inactive proenzyme. Formation of the active enzyme involves a self-maturation process in which the active site pyruvoyl group is generated from an internal serine residue via an autocatalytic post-translational modification. Two non-identical subunits are generated from the proenzyme in this reaction, and the pyruvate is formed at the N-terminus of the alpha chain, which is derived from the carboxyl end of the proenzyme. The autoendoproteolytic cleavage occurs by a canonical serine protease mechanism, in which the side chain hydroxyl group of the serine supplies its oxygen atom to form the C-terminus of the beta chain, while the remainder of the serine residue undergoes an oxidative deamination to produce ammonia and the pyruvoyl prosthetic group on the alpha chain. During this reaction, the Ser that is part of the protease active site of the proenzyme becomes the pyruvoyl prosthetic group, which constitutes an essential element of the active site of the mature decarboxylase.

It localises to the cell membrane. The catalysed reaction is a 1,2-diacyl-sn-glycero-3-phospho-L-serine + H(+) = a 1,2-diacyl-sn-glycero-3-phosphoethanolamine + CO2. Its pathway is phospholipid metabolism; phosphatidylethanolamine biosynthesis; phosphatidylethanolamine from CDP-diacylglycerol: step 2/2. In terms of biological role, catalyzes the formation of phosphatidylethanolamine (PtdEtn) from phosphatidylserine (PtdSer). In Clostridium perfringens (strain SM101 / Type A), this protein is Phosphatidylserine decarboxylase proenzyme.